The chain runs to 369 residues: Glutamate 5-kinase (369 aa).

Lys-9 provides a ligand contact to ATP. The substrate site is built by Ser-49, Asp-136, and Asn-148. ATP is bound by residues 168-169 and 210-216; these read TD and TGGMLTK. The PUA domain maps to 275–355; that stretch reads QGEIYVDQGA…KGVVIHRDDW (81 aa).

Belongs to the glutamate 5-kinase family.

The protein resides in the cytoplasm. The enzyme catalyses L-glutamate + ATP = L-glutamyl 5-phosphate + ADP. It participates in amino-acid biosynthesis; L-proline biosynthesis; L-glutamate 5-semialdehyde from L-glutamate: step 1/2. Catalyzes the transfer of a phosphate group to glutamate to form L-glutamate 5-phosphate. The protein is Glutamate 5-kinase of Streptococcus gordonii (strain Challis / ATCC 35105 / BCRC 15272 / CH1 / DL1 / V288).